Consider the following 249-residue polypeptide: Probable transcriptional regulatory protein Minf_0651 (249 aa).

Belongs to the TACO1 family.

The protein localises to the cytoplasm. This Methylacidiphilum infernorum (isolate V4) (Methylokorus infernorum (strain V4)) protein is Probable transcriptional regulatory protein Minf_0651.